A 129-amino-acid chain; its full sequence is Chromatin accessibility complex protein 1 (129 aa).

N-acetylalanine is present on Ala2. N6-acetyllysine is present on Lys102. Positions 104 to 120 form a coiled coil; sequence LKMLKEKREEEEDNEDD. The disordered stretch occupies residues 109–129; sequence EKREEEEDNEDDGSDLGEALA. Acidic residues predominate over residues 112 to 123; the sequence is EEEEDNEDDGSD. Residue Ser122 is modified to Phosphoserine.

In terms of assembly, heterodimer with POLE3; binds to DNA. Component of the CHRAC ISWI chromatin remodeling complex at least composed of SMARCA5/SNF2H, BAZ1A/ACF1, CHRAC1 and POLE3; the complex preferentially binds DNA through the CHRAC1-POLE3 heterodimer and possesses ATP-dependent nucleosome-remodeling activity. Within the complex, the heterodimer with POLE3 interacts with SMARCA5/SNF2H; the interaction is direct and enhances nucleosome sliding activity by the SMARCA5/SNF2H and BAZ1A/ACF1 interaction. Within the complex, the heterodimer with POLE3 interacts with BAZ1A/ACF1; the interactions are direct. As to expression, ubiquitously expressed.

It is found in the nucleus. Functionally, forms a complex with DNA polymerase epsilon subunit POLE3 and binds naked DNA, which is then incorporated into chromatin, aided by the nucleosome remodeling activity of ISWI/SNF2H and ACF1. Does not enhance nucleosome sliding activity of the ACF-5 ISWI chromatin remodeling complex. This Mus musculus (Mouse) protein is Chromatin accessibility complex protein 1 (Chrac1).